A 728-amino-acid chain; its full sequence is FAD-dependent monooxygenase avaB (728 aa).

A helical membrane pass occupies residues 17-37; sequence VIDLLLTFFFYSGLYGLIAAK. Polar residues predominate over residues 50–64; the sequence is NQQCENTDDVPQSFQ. Residues 50–72 are disordered; sequence NQQCENTDDVPQSFQRPRDTRST. Residue Val168 participates in FAD binding. Residue 490-491 participates in NADP(+) binding; it reads DL.

Belongs to the FAD-binding monooxygenase family. It depends on FAD as a cofactor.

The protein localises to the membrane. It functions in the pathway secondary metabolite metabolism. Functionally, multifunctional FAD-dependent monooxygenase; part of the cluster that mediates the biosynthesis of a highly modified cyclo-arginine-tryptophan dipeptide (cRW). Within the pathway, avaB uses the avaA cyclo-arginine-tryptophan dipeptide (cRW) as substrate to generate the cyclo-Arg-formylkynurenine diketopiperazine (DKP). AvaB also catalyzes an additional N-oxidation of the avaC product which is followed by cyclization and dehydration. The first step of the pathway is perfornmed by the arginine-containing cyclodipeptide synthase (RCPDS) avaA that acts as the scaffold-generating enzyme and is responsible for formation of the cyclo-Arg-Trp (cRW) diketopiperazine. AvaB then acts as a multifunctional flavoenzyme that is responsible for generating the cyclo-Arg-formylkynurenine DKP, which can be deformylated by avaC. AvaB then further catalyzes an additional N-oxidation followed by cyclization and dehydration. The next step is an N-acetylation of the guanidine group catalyzed by the arginine N-acetyltransferase avaD. The roles of the additional enzymes identified within the ava cluster still have to be determined. The chain is FAD-dependent monooxygenase avaB from Aspergillus versicolor.